The chain runs to 464 residues: Cysteine--tRNA ligase (464 aa).

Position 27 (Cys27) interacts with Zn(2+). The 'HIGH' region signature appears at 29–39 (PTVYNFFHIGN). Positions 207, 232, and 236 each coordinate Zn(2+). The 'KMSKS' region motif lies at 264-268 (KMSKS). Residue Lys267 coordinates ATP.

The protein belongs to the class-I aminoacyl-tRNA synthetase family. In terms of assembly, monomer. The cofactor is Zn(2+).

The protein localises to the cytoplasm. It catalyses the reaction tRNA(Cys) + L-cysteine + ATP = L-cysteinyl-tRNA(Cys) + AMP + diphosphate. This is Cysteine--tRNA ligase from Clostridium acetobutylicum (strain ATCC 824 / DSM 792 / JCM 1419 / IAM 19013 / LMG 5710 / NBRC 13948 / NRRL B-527 / VKM B-1787 / 2291 / W).